The primary structure comprises 88 residues: Exodeoxyribonuclease 7 small subunit (88 aa).

Belongs to the XseB family. Heterooligomer composed of large and small subunits.

It localises to the cytoplasm. It catalyses the reaction Exonucleolytic cleavage in either 5'- to 3'- or 3'- to 5'-direction to yield nucleoside 5'-phosphates.. Functionally, bidirectionally degrades single-stranded DNA into large acid-insoluble oligonucleotides, which are then degraded further into small acid-soluble oligonucleotides. In Tolumonas auensis (strain DSM 9187 / NBRC 110442 / TA 4), this protein is Exodeoxyribonuclease 7 small subunit.